We begin with the raw amino-acid sequence, 468 residues long: MAVAAALTGLQAEAKCSICLDYLSDPVTIECGHNFCRSCIQQSWLDLQELFPCPVCRHQCQEGHFRSNTQLGRMIEIAKLLQSTKSNKRKQEETTLCEKHNQPLSVFCKEDLMVLCPLCTQPPDHQGHHVRPIEKAAIHYRKRFCSYIQPLKKQLADLQKLISTQSKKPLELREMVENQRQELSSEFEHLNQFLDREQQAVLSRLAEEEKDNQQKLSANITAFSNYSATLKSQLSKVVELSELSELELLSQIKIFYESENESSPSIFSIHLKRDGCSFPPQYSALQRIIKKFKVEIILDPETAHPNLIVSEDKKRVRFTKRKQKVPGFPKRFTVKPVVLGFPYFHSGRHFWEIEVGDKSEWAIGICKDSLPTKARRPSSAQQECWRIELQDDGYHAPGAFPTPLLLEVKARAIGIFLDYEMGEISFYNMAEKSHICTFTDTFTGPLRPYFYVGPDSQPLRICTGTVCE.

Residues 16-57 (CSICLDYLSDPVTIECGHNFCRSCIQQSWLDLQELFPCPVCR) form an RING-type zinc finger. A B box-type zinc finger spans residues 92 to 133 (EETTLCEKHNQPLSVFCKEDLMVLCPLCTQPPDHQGHHVRPI). The Zn(2+) site is built by Cys-97, His-100, Cys-119, and His-125. Residues 170–222 (LELREMVENQRQELSSEFEHLNQFLDREQQAVLSRLAEEEKDNQQKLSANITA) are a coiled coil. Positions 276-468 (CSFPPQYSAL…LRICTGTVCE (193 aa)) constitute a B30.2/SPRY domain.

It belongs to the TRIM/RBCC family.

It is found in the cytoplasm. The protein localises to the cytoskeleton. It localises to the spindle. May play a role in female meiosis. The chain is Tripartite motif-containing protein 75 from Homo sapiens (Human).